The primary structure comprises 110 residues: Protein YcgL (110 aa).

The YcgL domain maps to 14 to 98 (MFCVIYRSSK…PPEDLLKQHL (85 aa)). The disordered stretch occupies residues 87–110 (PPPPEDLLKQHLSSVGQNTSPADR). Over residues 97-110 (HLSSVGQNTSPADR) the composition is skewed to polar residues.

This chain is Protein YcgL, found in Salmonella choleraesuis (strain SC-B67).